Reading from the N-terminus, the 381-residue chain is tRNA-cytidine(32) 2-sulfurtransferase (381 aa).

The short motif at 101–106 is the PP-loop motif element; the sequence is SGGKDS. Residues Cys-176, Cys-179, and Cys-267 each contribute to the [4Fe-4S] cluster site.

Belongs to the TtcA family. In terms of assembly, homodimer. Mg(2+) is required as a cofactor. Requires [4Fe-4S] cluster as cofactor.

The protein resides in the cytoplasm. It catalyses the reaction cytidine(32) in tRNA + S-sulfanyl-L-cysteinyl-[cysteine desulfurase] + AH2 + ATP = 2-thiocytidine(32) in tRNA + L-cysteinyl-[cysteine desulfurase] + A + AMP + diphosphate + H(+). It functions in the pathway tRNA modification. Its function is as follows. Catalyzes the ATP-dependent 2-thiolation of cytidine in position 32 of tRNA, to form 2-thiocytidine (s(2)C32). The sulfur atoms are provided by the cysteine/cysteine desulfurase (IscS) system. This Psychrobacter cryohalolentis (strain ATCC BAA-1226 / DSM 17306 / VKM B-2378 / K5) protein is tRNA-cytidine(32) 2-sulfurtransferase.